The sequence spans 270 residues: Phosphatidylglycerol--prolipoprotein diacylglyceryl transferase (270 aa).

Helical transmembrane passes span 18 to 38 (ITIY…LWLA), 55 to 75 (LVLF…VLFE), 90 to 110 (WQGG…GAVF), and 115 to 135 (GLSF…GQAI). Arg-137 is an a 1,2-diacyl-sn-glycero-3-phospho-(1'-sn-glycerol) binding site. Transmembrane regions (helical) follow at residues 177–197 (HPTF…LLWL), 205–225 (GELF…IEGM), and 236–256 (LRAA…LWIV).

It belongs to the Lgt family.

The protein localises to the cell membrane. It catalyses the reaction L-cysteinyl-[prolipoprotein] + a 1,2-diacyl-sn-glycero-3-phospho-(1'-sn-glycerol) = an S-1,2-diacyl-sn-glyceryl-L-cysteinyl-[prolipoprotein] + sn-glycerol 1-phosphate + H(+). It functions in the pathway protein modification; lipoprotein biosynthesis (diacylglyceryl transfer). In terms of biological role, catalyzes the transfer of the diacylglyceryl group from phosphatidylglycerol to the sulfhydryl group of the N-terminal cysteine of a prolipoprotein, the first step in the formation of mature lipoproteins. This Geobacillus kaustophilus (strain HTA426) protein is Phosphatidylglycerol--prolipoprotein diacylglyceryl transferase.